Here is a 147-residue protein sequence, read N- to C-terminus: Angiogenin (147 aa).

The signal sequence occupies residues 1-24; the sequence is MVILLGPLLLVFMLGLGLAPLSLA. His37 serves as the catalytic Proton acceptor. Residues Arg45 and Asp46 each contribute to the tRNA site. 3 disulfides stabilise this stretch: Cys50/Cys104, Cys63/Cys115, and Cys81/Cys130. The Nucleolar localization signal signature appears at 55–59; it reads KQRGL. Residues Cys104 and Ile126 each contribute to the tRNA site. Catalysis depends on His137, which acts as the Proton donor.

It belongs to the pancreatic ribonuclease family. Homodimer. Interacts with RNH1; inhibiting ANG ribonuclease activity. Interacts with PCNA.

The protein localises to the secreted. Its subcellular location is the nucleus. It is found in the nucleolus. It localises to the cytoplasm. The protein resides in the stress granule. Has weak tRNA ribonuclease activity by itself due to partial autoinhibition by its C-terminus, which folds into a short alpha-helix that partially occludes the substrate-binding site. In absence of stress, the ribonuclease activity is inhibited by RNH1 in the cytoplasm. In response to stress, dissociates from RNH1 in the cytoplasm and associates with cytoplasmic ribosomes with vacant A-sites: ribosomes directly activate the tRNA ribonuclease activity of ANG by refolding the C-terminal alpha-helix. In response to stress, the angiogenic activity of ANG is inhibited by RNH1 in the nucleus. Its function is as follows. Secreted ribonuclease that can either promote or restrict cell proliferation of target cells, depending on the context. Endocytosed in target cells via its receptor PLXNB2 and translocates to the cytoplasm or nucleus. Under stress conditions, localizes to the cytoplasm and promotes the assembly of stress granules (SGs): specifically cleaves a subset of tRNAs within anticodon loops to produce tRNA-derived stress-induced fragments (tiRNAs), resulting in translation repression and inhibition of cell proliferation. tiRNas also prevent formation of apoptosome, thereby promoting cell survival. Preferentially cleaves RNAs between a pyrimidine and an adenosine residue, suggesting that it cleaves the anticodon loop of tRNA(Ala) (32-UUAGCAU-38) after positions 33 and 36. Cleaves a subset of tRNAs, including tRNA(Ala), tRNA(Glu), tRNA(Gly), tRNA(Lys), tRNA(Val), tRNA(His), tRNA(Asp) and tRNA(Sec). Under growth conditions and in differentiated cells, translocates to the nucleus and stimulates ribosomal RNA (rRNA) transcription, including that containing the initiation site sequences of 45S rRNA, thereby promoting cell growth and proliferation. Angiogenin induces vascularization of normal and malignant tissues via its ability to promote rRNA transcription. Involved in hematopoietic stem and progenitor cell (HSPC) growth and survival by promoting rRNA transcription in growth conditions and inhibiting translation in response to stress, respectively. Mediates the crosstalk between myeloid and intestinal epithelial cells to protect the intestinal epithelial barrier integrity: secreted by myeloid cells and promotes intestinal epithelial cells proliferation and survival. Also mediates osteoclast-endothelial cell crosstalk in growing bone: produced by osteoclasts and protects the neighboring vascular cells against senescence by promoting rRNA transcription. This is Angiogenin (ANG) from Sus scrofa (Pig).